A 232-amino-acid chain; its full sequence is MAKEGKRIRAAREGIEATKLYALDEAIKLVKERATAKFDETVEVSMNLGVDPRHADQMVRGVCNLPNGSGRTVRVAVFARGAKADDARAAGADIVGAEDLLEIVQGGKIEFDRCIATPDMMPLVGRLGKVLGPRGLMPNPKVGTVTMDVKGAVAGAKGGSVEFRVEKAGIVHAGVGKVSFDADKLVENIKAFADAVAKAKPAGAKGTYVQRIAVTSTMGPGVKVEPNTVLTA.

This sequence belongs to the universal ribosomal protein uL1 family. Part of the 50S ribosomal subunit.

In terms of biological role, binds directly to 23S rRNA. The L1 stalk is quite mobile in the ribosome, and is involved in E site tRNA release. Its function is as follows. Protein L1 is also a translational repressor protein, it controls the translation of the L11 operon by binding to its mRNA. This is Large ribosomal subunit protein uL1 from Methylobacterium radiotolerans (strain ATCC 27329 / DSM 1819 / JCM 2831 / NBRC 15690 / NCIMB 10815 / 0-1).